A 213-amino-acid chain; its full sequence is Guanylate kinase (213 aa).

One can recognise a Guanylate kinase-like domain in the interval 10–189; it reads GLLLMVVAPS…AYADLAHIYH (180 aa). Residue 17–24 coordinates ATP; that stretch reads APSGVGKT.

Belongs to the guanylate kinase family.

The protein localises to the cytoplasm. It catalyses the reaction GMP + ATP = GDP + ADP. Its function is as follows. Essential for recycling GMP and indirectly, cGMP. The polypeptide is Guanylate kinase (gmk) (Caulobacter vibrioides (strain ATCC 19089 / CIP 103742 / CB 15) (Caulobacter crescentus)).